The primary structure comprises 268 residues: tRNA pseudouridine synthase A (268 aa).

Aspartate 52 acts as the Nucleophile in catalysis. Tyrosine 110 provides a ligand contact to substrate.

Belongs to the tRNA pseudouridine synthase TruA family. As to quaternary structure, homodimer.

The catalysed reaction is uridine(38/39/40) in tRNA = pseudouridine(38/39/40) in tRNA. In terms of biological role, formation of pseudouridine at positions 38, 39 and 40 in the anticodon stem and loop of transfer RNAs. This Prochlorococcus marinus subsp. pastoris (strain CCMP1986 / NIES-2087 / MED4) protein is tRNA pseudouridine synthase A.